The following is a 151-amino-acid chain: uncharacterized protein (151 aa).

The signal sequence occupies residues 1–24 (MYYSIIIACLVLLLCLVIYVGHRA).

This sequence belongs to the asfivirus EP152R family.

The protein localises to the virion. This is an uncharacterized protein from Ornithodoros (relapsing fever ticks).